We begin with the raw amino-acid sequence, 484 residues long: Ribosomal RNA small subunit methyltransferase F (484 aa).

Residues 126–132, Glu150, Asp177, and Asp195 each bind S-adenosyl-L-methionine; that span reads AAAPGSK. The active-site Nucleophile is the Cys248.

This sequence belongs to the class I-like SAM-binding methyltransferase superfamily. RsmB/NOP family.

It localises to the cytoplasm. It catalyses the reaction cytidine(1407) in 16S rRNA + S-adenosyl-L-methionine = 5-methylcytidine(1407) in 16S rRNA + S-adenosyl-L-homocysteine + H(+). Functionally, specifically methylates the cytosine at position 1407 (m5C1407) of 16S rRNA. The chain is Ribosomal RNA small subunit methyltransferase F from Pectobacterium carotovorum subsp. carotovorum (strain PC1).